The sequence spans 236 residues: Ribonuclease 3 (236 aa).

The RNase III domain occupies 8-130; sequence FRRLSQALDY…TFAAVSFDAD (123 aa). E43 contacts Mg(2+). Residue D47 is part of the active site. Mg(2+)-binding residues include D116 and E119. E119 is an active-site residue. A DRBM domain is found at 157–227; that stretch reads DAKTRLQEAL…AEAALTLLEQ (71 aa).

This sequence belongs to the ribonuclease III family. In terms of assembly, homodimer. The cofactor is Mg(2+).

Its subcellular location is the cytoplasm. It catalyses the reaction Endonucleolytic cleavage to 5'-phosphomonoester.. Digests double-stranded RNA. Involved in the processing of primary rRNA transcript to yield the immediate precursors to the large and small rRNAs (23S and 16S). Processes some mRNAs, and tRNAs when they are encoded in the rRNA operon. Processes pre-crRNA and tracrRNA of type II CRISPR loci if present in the organism. The polypeptide is Ribonuclease 3 (Chromobacterium violaceum (strain ATCC 12472 / DSM 30191 / JCM 1249 / CCUG 213 / NBRC 12614 / NCIMB 9131 / NCTC 9757 / MK)).